The sequence spans 209 residues: Uracil phosphoribosyltransferase (209 aa).

5-phospho-alpha-D-ribose 1-diphosphate-binding positions include arginine 79, arginine 104, and 131-139; that span reads DPMLATGGS. Uracil contacts are provided by residues isoleucine 194 and 199 to 201; that span reads GDA. Residue aspartate 200 coordinates 5-phospho-alpha-D-ribose 1-diphosphate.

This sequence belongs to the UPRTase family. Mg(2+) is required as a cofactor.

It carries out the reaction UMP + diphosphate = 5-phospho-alpha-D-ribose 1-diphosphate + uracil. Its pathway is pyrimidine metabolism; UMP biosynthesis via salvage pathway; UMP from uracil: step 1/1. Allosterically activated by GTP. Catalyzes the conversion of uracil and 5-phospho-alpha-D-ribose 1-diphosphate (PRPP) to UMP and diphosphate. The polypeptide is Uracil phosphoribosyltransferase (Lactobacillus delbrueckii subsp. bulgaricus (strain ATCC 11842 / DSM 20081 / BCRC 10696 / JCM 1002 / NBRC 13953 / NCIMB 11778 / NCTC 12712 / WDCM 00102 / Lb 14)).